The primary structure comprises 225 residues: Rho GDP-dissociation inhibitor 3 (225 aa).

Belongs to the Rho GDI family. Detected only in brain, lung, kidney and testis.

Its subcellular location is the cytoplasm. Its function is as follows. Inhibits GDP/GTP exchange reaction of RhoB. Interacts specifically with the GDP- and GTP-bound forms of post-translationally processed Rhob and Rhog proteins, both of which show a growth-regulated expression in mammalian cells. Stimulates the release of the GDP-bound but not the GTP-bound RhoB protein. Also inhibits the GDP/GTP exchange of RhoB but shows less ability to inhibit the dissociation of prebound GTP. The polypeptide is Rho GDP-dissociation inhibitor 3 (Arhgdig) (Mus musculus (Mouse)).